The following is a 207-amino-acid chain: Protein FMP32, mitochondrial (207 aa).

Residues 100 to 136 (ADRSEFHNIQNEYESVKNDLEKLRNKLREEITKTNAG) adopt a coiled-coil conformation. A helical transmembrane segment spans residues 184-206 (VMQWLIGVCTGTFALVLAYMRLL).

It belongs to the CCDC90 family.

The protein localises to the mitochondrion. The protein resides in the membrane. This is Protein FMP32, mitochondrial (FMP32) from Saccharomyces cerevisiae (strain ATCC 204508 / S288c) (Baker's yeast).